Consider the following 237-residue polypeptide: Phosphoribosylaminoimidazole-succinocarboxamide synthase (237 aa).

This sequence belongs to the SAICAR synthetase family.

It catalyses the reaction 5-amino-1-(5-phospho-D-ribosyl)imidazole-4-carboxylate + L-aspartate + ATP = (2S)-2-[5-amino-1-(5-phospho-beta-D-ribosyl)imidazole-4-carboxamido]succinate + ADP + phosphate + 2 H(+). Its pathway is purine metabolism; IMP biosynthesis via de novo pathway; 5-amino-1-(5-phospho-D-ribosyl)imidazole-4-carboxamide from 5-amino-1-(5-phospho-D-ribosyl)imidazole-4-carboxylate: step 1/2. The polypeptide is Phosphoribosylaminoimidazole-succinocarboxamide synthase (Enterobacter sp. (strain 638)).